The chain runs to 258 residues: Deoxyribose-phosphate aldolase (258 aa).

Aspartate 101 serves as the catalytic Proton donor/acceptor. Lysine 166 functions as the Schiff-base intermediate with acetaldehyde in the catalytic mechanism. Residue lysine 200 is the Proton donor/acceptor of the active site.

Belongs to the DeoC/FbaB aldolase family. DeoC type 2 subfamily.

Its subcellular location is the cytoplasm. The catalysed reaction is 2-deoxy-D-ribose 5-phosphate = D-glyceraldehyde 3-phosphate + acetaldehyde. Its pathway is carbohydrate degradation; 2-deoxy-D-ribose 1-phosphate degradation; D-glyceraldehyde 3-phosphate and acetaldehyde from 2-deoxy-alpha-D-ribose 1-phosphate: step 2/2. Its function is as follows. Catalyzes a reversible aldol reaction between acetaldehyde and D-glyceraldehyde 3-phosphate to generate 2-deoxy-D-ribose 5-phosphate. The sequence is that of Deoxyribose-phosphate aldolase from Actinobacillus pleuropneumoniae serotype 5b (strain L20).